A 70-amino-acid chain; its full sequence is Small ribosomal subunit protein bS21 (70 aa).

This sequence belongs to the bacterial ribosomal protein bS21 family.

In Azoarcus sp. (strain BH72), this protein is Small ribosomal subunit protein bS21.